Consider the following 228-residue polypeptide: Ephrin-A5 (228 aa).

Residues 1 to 20 (MLHVEMLTLLFLVLWMCVFS) form the signal peptide. The Ephrin RBD domain maps to 29–162 (ADRYAVYWNS…KLKVFVRPTN (134 aa)). A glycan (N-linked (GlcNAc...) asparagine) is linked at asparagine 37. 2 cysteine pairs are disulfide-bonded: cysteine 62–cysteine 102 and cysteine 90–cysteine 151. A disordered region spans residues 186–205 (EPADDTVHESAEPSRGENAA). A compositionally biased stretch (basic and acidic residues) spans 190–200 (DTVHESAEPSR). A lipid anchor (GPI-anchor amidated asparagine) is attached at asparagine 203. Residues 204–228 (AAQTPRIPSRLLAILLFLLAMLLTL) constitute a propeptide, removed in mature form.

This sequence belongs to the ephrin family. In terms of assembly, binds to the receptor tyrosine kinases EPHA2, EPHA3, EPHB1 and EPHB2. Interacts with EPHA8; activates EPHA8. Forms a ternary EFNA5-EPHA3-ADAM10 complex mediating EFNA5 extracellular domain shedding by ADAM10 which regulates the EFNA5-EPHA3 complex internalization and function. As to expression, expressed in brain, heart, placenta and lung.

It is found in the cell membrane. Its subcellular location is the membrane. The protein localises to the caveola. Its function is as follows. Cell surface GPI-bound ligand for Eph receptors, a family of receptor tyrosine kinases which are crucial for migration, repulsion and adhesion during neuronal, vascular and epithelial development. Binds promiscuously Eph receptors residing on adjacent cells, leading to contact-dependent bidirectional signaling into neighboring cells. The signaling pathway downstream of the receptor is referred to as forward signaling while the signaling pathway downstream of the ephrin ligand is referred to as reverse signaling. Induces compartmentalized signaling within a caveolae-like membrane microdomain when bound to the extracellular domain of its cognate receptor. This signaling event requires the activity of the Fyn tyrosine kinase. Activates the EPHA3 receptor to regulate cell-cell adhesion and cytoskeletal organization. With the receptor EPHA2 may regulate lens fiber cells shape and interactions and be important for lens transparency maintenance. May function actively to stimulate axon fasciculation. The interaction of EFNA5 with EPHA5 also mediates communication between pancreatic islet cells to regulate glucose-stimulated insulin secretion. Cognate/functional ligand for EPHA7, their interaction regulates brain development modulating cell-cell adhesion and repulsion. This chain is Ephrin-A5 (Efna5), found in Rattus norvegicus (Rat).